The sequence spans 499 residues: Anaerobic magnesium-protoporphyrin IX monomethyl ester cyclase (499 aa).

Residues 9–145 (PHPAIGSRIP…AALENHNDLN (137 aa)) enclose the B12-binding domain. In terms of domain architecture, Radical SAM core spans 188-420 (YGGKQAVVIQ…PPWRIFLWVK (233 aa)). [4Fe-4S] cluster-binding residues include Cys-202, Cys-206, and Cys-209.

It belongs to the BchE family. It depends on [4Fe-4S] cluster as a cofactor. The cofactor is adenosylcob(III)alamin.

It catalyses the reaction Mg-protoporphyrin IX 13-monomethyl ester + 3 S-adenosyl-L-methionine + H2O = 3,8-divinyl protochlorophyllide a + 3 5'-deoxyadenosine + 3 L-methionine + 4 H(+). Its pathway is porphyrin-containing compound metabolism; bacteriochlorophyll biosynthesis (light-independent). Functionally, involved in the tetrapyrrole biosynthetic pathways leading to chlorophyll and bacteriochlorophyll (BChl). Catalyzes the anaerobic formation of the isocyclic ring (E-ring) in Mg-protoporphyrin monomethyl ester (MPE) to yield protochlorophyllide a (PChlide a) via a six-electron oxidation and the formation of an oxo group at position C13 using oxygen from a water molecule. In Synechocystis sp. (strain ATCC 27184 / PCC 6803 / Kazusa), this protein is Anaerobic magnesium-protoporphyrin IX monomethyl ester cyclase.